A 468-amino-acid polypeptide reads, in one-letter code: Phosphomethylpyrimidine synthase (468 aa).

Substrate is bound by residues N82, M111, Y141, H177, 197 to 199 (SRG), 238 to 241 (DSLR), and E277. H281 contacts Zn(2+). Y304 is a binding site for substrate. Residue H345 participates in Zn(2+) binding. 3 residues coordinate [4Fe-4S] cluster: C425, C428, and C433.

This sequence belongs to the ThiC family. [4Fe-4S] cluster serves as cofactor.

The catalysed reaction is 5-amino-1-(5-phospho-beta-D-ribosyl)imidazole + S-adenosyl-L-methionine = 4-amino-2-methyl-5-(phosphooxymethyl)pyrimidine + CO + 5'-deoxyadenosine + formate + L-methionine + 3 H(+). The protein operates within cofactor biosynthesis; thiamine diphosphate biosynthesis. Catalyzes the synthesis of the hydroxymethylpyrimidine phosphate (HMP-P) moiety of thiamine from aminoimidazole ribotide (AIR) in a radical S-adenosyl-L-methionine (SAM)-dependent reaction. In Prochlorococcus marinus (strain SARG / CCMP1375 / SS120), this protein is Phosphomethylpyrimidine synthase.